Here is a 461-residue protein sequence, read N- to C-terminus: Phosphoenolpyruvate carboxylase (461 aa).

Belongs to the PEPCase type 2 family. In terms of assembly, homotetramer. The cofactor is Mg(2+).

It catalyses the reaction oxaloacetate + phosphate = phosphoenolpyruvate + hydrogencarbonate. Catalyzes the irreversible beta-carboxylation of phosphoenolpyruvate (PEP) to form oxaloacetate (OAA), a four-carbon dicarboxylic acid source for the tricarboxylic acid cycle. This is Phosphoenolpyruvate carboxylase from Pyrobaculum islandicum (strain DSM 4184 / JCM 9189 / GEO3).